The chain runs to 271 residues: Phosphatidylinositol transfer protein beta isoform (271 aa).

The residue at position 215 (K215) is an N6-acetyllysine. S262 carries the phosphoserine modification.

It belongs to the PtdIns transfer protein family. PI transfer class I subfamily. Constitutive phosphorylation of Ser-262 has no effect on phospholipid transfer activity but is required for Golgi targeting.

It localises to the golgi apparatus. The protein localises to the golgi apparatus membrane. The protein resides in the endoplasmic reticulum membrane. The enzyme catalyses a 1,2-diacyl-sn-glycero-3-phosphocholine(in) = a 1,2-diacyl-sn-glycero-3-phosphocholine(out). It carries out the reaction a 1,2-diacyl-sn-glycero-3-phospho-(1D-myo-inositol)(in) = a 1,2-diacyl-sn-glycero-3-phospho-(1D-myo-inositol)(out). The catalysed reaction is an N-(acyl)-sphingosylphosphocholine(in) = an N-(acyl)-sphingosylphosphocholine(out). Its function is as follows. Catalyzes the transfer of phosphatidylinositol, phosphatidylcholine and sphingomyelin between membranes. Required for COPI-mediated retrograde transport from the Golgi to the endoplasmic reticulum; phosphatidylinositol and phosphatidylcholine transfer activity is essential for this function. The sequence is that of Phosphatidylinositol transfer protein beta isoform (PITPNB) from Bos taurus (Bovine).